Here is a 43-residue protein sequence, read N- to C-terminus: Protein PsbN (43 aa).

A helical transmembrane segment spans residues 4–24 (ATFVAIFISCLLISFTGYALY).

Belongs to the PsbN family.

The protein resides in the plastid. The protein localises to the chloroplast thylakoid membrane. In terms of biological role, may play a role in photosystem I and II biogenesis. This Marchantia polymorpha (Common liverwort) protein is Protein PsbN.